The chain runs to 436 residues: Histidine--tRNA ligase (436 aa).

It belongs to the class-II aminoacyl-tRNA synthetase family. In terms of assembly, homodimer.

It is found in the cytoplasm. The enzyme catalyses tRNA(His) + L-histidine + ATP = L-histidyl-tRNA(His) + AMP + diphosphate + H(+). The sequence is that of Histidine--tRNA ligase from Prochlorococcus marinus (strain MIT 9313).